The primary structure comprises 106 residues: Thioredoxin (106 aa).

A Thioredoxin domain is found at 2 to 106 (SHYIELTEEN…LKEQLNKLLG (105 aa)). Cysteine 30 and cysteine 33 are oxidised to a cystine.

The protein belongs to the thioredoxin family.

Functionally, participates in various redox reactions through the reversible oxidation of its active center dithiol to a disulfide and catalyzes dithiol-disulfide exchange reactions. The chain is Thioredoxin (trxA) from Helicobacter pylori (strain J99 / ATCC 700824) (Campylobacter pylori J99).